The primary structure comprises 284 residues: Expansin-A17 (284 aa).

The N-terminal stretch at 1-21 (MASSWNNPAIFLAAALAVATA) is a signal peptide. In terms of domain architecture, Expansin-like EG45 spans 71-185 (GGACGYVSND…RRVPCQRTGG (115 aa)). Residues 195 to 279 (YWLLLYVMNV…WWITGLCYQG (85 aa)) enclose the Expansin-like CBD domain.

This sequence belongs to the expansin family. Expansin A subfamily. In terms of tissue distribution, expressed in roots.

Its subcellular location is the secreted. The protein localises to the cell wall. It is found in the membrane. May cause loosening and extension of plant cell walls by disrupting non-covalent bonding between cellulose microfibrils and matrix glucans. No enzymatic activity has been found. May be required for rapid internodal elongation in deepwater rice during submergence. The protein is Expansin-A17 (EXPA17) of Oryza sativa subsp. japonica (Rice).